The chain runs to 324 residues: Proto-oncogene Mas (324 aa).

The Extracellular segment spans residues 1-35; it reads MDQSNMTSFAEEKAMNTSSRNASLGTSHPPIPIVH. N-linked (GlcNAc...) asparagine glycosylation is found at Asn5, Asn16, and Asn21. Residues 36 to 60 traverse the membrane as a helical segment; sequence WVIMSISPLGFVENGILLWFLCFRM. The Cytoplasmic segment spans residues 61–64; that stretch reads RRNP. A helical transmembrane segment spans residues 65–86; it reads FTVYITHLSIADISLLFCIFIL. The Extracellular portion of the chain corresponds to 87–103; that stretch reads SIDYALDYELSSGHYYT. A helical transmembrane segment spans residues 104-127; the sequence is IVTLSVTFLFGYNTGLYLLTAISV. Topologically, residues 128 to 148 are cytoplasmic; that stretch reads ERCLSVLYPIWYRCHRPKHQS. The chain crosses the membrane as a helical span at residues 149–171; it reads AFVCALLWALSCLVTTMEYVMCI. Residues 172–184 are Extracellular-facing; the sequence is DSGEESHSQSDCR. A helical membrane pass occupies residues 185–205; it reads AVIIFIAILSFLVFTPLMLVS. The Cytoplasmic segment spans residues 206 to 223; sequence STILVVKIRKNTWASHSS. A helical membrane pass occupies residues 224 to 244; the sequence is KLYIVIMVTIIIFLIFAMPMR. Topologically, residues 245–262 are extracellular; sequence VLYLLYYEYWSTFGNLHN. Residues 263–283 traverse the membrane as a helical segment; sequence ISLLFSTINSSANPFIYFFVG. At 284–324 the chain is on the cytoplasmic side; the sequence is SSKKKRFRESLKVVLTRAFKDEMQPRRQEGNGNTVSIETVV.

Belongs to the G-protein coupled receptor 1 family. As to quaternary structure, interacts with AGTR1. Interacts with FLNA (via filamin repeat 21); increases PKA-mediated phosphorylation of FLNA. Expressed in platelets.

The protein resides in the cell membrane. Its function is as follows. Receptor for angiotensin 1-7. Acts specifically as a functional antagonist of AGTR1 (angiotensin-2 type 1 receptor), although it up-regulates AGTR1 receptor levels. Positive regulation of AGTR1 levels occurs through activation of the G-proteins GNA11 and GNAQ, and stimulation of the protein kinase C signaling cascade. The antagonist effect on AGTR1 function is probably due to AGTR1 being physically altered by MAS1. The chain is Proto-oncogene Mas (Mas1) from Rattus norvegicus (Rat).